Here is a 259-residue protein sequence, read N- to C-terminus: Imidazole glycerol phosphate synthase subunit HisF (259 aa).

Active-site residues include aspartate 11 and aspartate 130.

Belongs to the HisA/HisF family. In terms of assembly, heterodimer of HisH and HisF.

The protein localises to the cytoplasm. The catalysed reaction is 5-[(5-phospho-1-deoxy-D-ribulos-1-ylimino)methylamino]-1-(5-phospho-beta-D-ribosyl)imidazole-4-carboxamide + L-glutamine = D-erythro-1-(imidazol-4-yl)glycerol 3-phosphate + 5-amino-1-(5-phospho-beta-D-ribosyl)imidazole-4-carboxamide + L-glutamate + H(+). It participates in amino-acid biosynthesis; L-histidine biosynthesis; L-histidine from 5-phospho-alpha-D-ribose 1-diphosphate: step 5/9. Functionally, IGPS catalyzes the conversion of PRFAR and glutamine to IGP, AICAR and glutamate. The HisF subunit catalyzes the cyclization activity that produces IGP and AICAR from PRFAR using the ammonia provided by the HisH subunit. The protein is Imidazole glycerol phosphate synthase subunit HisF of Desulforapulum autotrophicum (strain ATCC 43914 / DSM 3382 / VKM B-1955 / HRM2) (Desulfobacterium autotrophicum).